The following is a 305-amino-acid chain: tRNA pseudouridine synthase B (305 aa).

Residue aspartate 39 is the Nucleophile of the active site.

Belongs to the pseudouridine synthase TruB family. Type 1 subfamily.

It catalyses the reaction uridine(55) in tRNA = pseudouridine(55) in tRNA. Functionally, responsible for synthesis of pseudouridine from uracil-55 in the psi GC loop of transfer RNAs. This is tRNA pseudouridine synthase B from Staphylococcus haemolyticus (strain JCSC1435).